We begin with the raw amino-acid sequence, 152 residues long: Deoxyuridine 5'-triphosphate nucleotidohydrolase (152 aa).

Substrate is bound by residues 71 to 73 (RSG), Asn-84, 88 to 90 (LID), and Met-98.

The protein belongs to the dUTPase family. Requires Mg(2+) as cofactor.

The enzyme catalyses dUTP + H2O = dUMP + diphosphate + H(+). It participates in pyrimidine metabolism; dUMP biosynthesis; dUMP from dCTP (dUTP route): step 2/2. In terms of biological role, this enzyme is involved in nucleotide metabolism: it produces dUMP, the immediate precursor of thymidine nucleotides and it decreases the intracellular concentration of dUTP so that uracil cannot be incorporated into DNA. The protein is Deoxyuridine 5'-triphosphate nucleotidohydrolase of Erwinia tasmaniensis (strain DSM 17950 / CFBP 7177 / CIP 109463 / NCPPB 4357 / Et1/99).